The chain runs to 373 residues: Schlafen-like protein 1 (373 aa).

The disordered stretch occupies residues 1 to 67 (MAALFEENDS…ELSSEEVDIP (67 aa)). The tract at residues 247 to 373 (KAGAKIEFRT…NQVYRLESSV (127 aa)) is SLFN-like fold.

Belongs to the Schlafen family. Component of the trimeric PUCH (precursor of 21U RNA 5'-end cleavage holoenzyme) complex; consisting of tofu-1, tofu-2 and either slfl-3 or slfl-4; which is required for processing of piRNA precursors. Within the complex, interacts (via N-terminus) with tofu-2 (via N-terminus); the interaction stabilizes tofu-2 and may form a functional nuclease. Within the complex, required for the interaction of tofu-2 (via N-terminus) with slfl-3 (via N-terminus). Interacts (via residues 82-172) with the PETISCO complex subunit tofu-6 (via residues 120-314); the interaction between the PETISCO and PUCH complex members enhances piRNA production in vivo. In terms of tissue distribution, expressed in the germline.

It is found in the cytoplasm. Component of the trimeric PUCH (precursor of 21U RNA 5'-end cleavage holoenzyme) complex, that acts as an endoribonuclease processing the 5'-end of precursor Piwi-interacting RNAs (piRNAs). The PUCH complex consists of tofu-1, tofu-2 and either slfl-3 or slfl-4, with tofu-2 exhibiting endoribonuclease activity. PUCH-mediated processing strictly requires a 7-methyl-G cap (m7 G-cap) and an uracil at position three (U3). PUCH also exhibits a strict bias for piRNA precursors with an A or G at position 1. Mature piRNA production is enhanced by the interaction of PUCH with the PETISCO complex, which is stabilizing piRNA precursors and allows their processing by PUCH. In Caenorhabditis elegans, this protein is Schlafen-like protein 1.